The chain runs to 437 residues: Eukaryotic peptide chain release factor subunit 1 (437 aa).

The NIKS motif; plays an important role in translational termination motif lies at 61-64 (NIKS).

It belongs to the eukaryotic release factor 1 family. Component of the eRF1-eRF3-GTP ternary complex, composed of ETF1/ERF1 and eRF3 (GSPT1/ERF3A or GSPT2/ERF3B) and GTP.

It is found in the cytoplasm. Its function is as follows. Component of the eRF1-eRF3-GTP ternary complex, a ternary complex that mediates translation termination in response to the termination codons. The eRF1-eRF3-GTP complex binds to a stop codon in the ribosomal A-site. ETF1/ERF1 is responsible for stop codon recognition and inducing hydrolysis of peptidyl-tRNA. Following GTP hydrolysis, eRF3 (GSPT1/ERF3A or GSPT2/ERF3B) dissociates, permitting ETF1/eRF1 to accommodate fully in the A-site, followed by hydrolysis of peptidyl-tRNA. This chain is Eukaryotic peptide chain release factor subunit 1 (etf1), found in Xenopus tropicalis (Western clawed frog).